Here is a 265-residue protein sequence, read N- to C-terminus: Eukaryotic translation initiation factor 3 subunit J (265 aa).

2 disordered regions span residues methionine 1–leucine 113 and serine 215–threonine 237. Positions aspartate 27 to valine 45 are enriched in acidic residues. Residues serine 43–glutamate 95 are a coiled coil. The segment covering glutamate 46–alanine 62 has biased composition (basic and acidic residues). Residues glutamate 86–glutamate 97 are compositionally biased toward acidic residues. Composition is skewed to basic and acidic residues over residues alanine 98 to leucine 113 and glutamate 217 to serine 229.

The protein belongs to the eIF-3 subunit J family. In terms of assembly, component of the eukaryotic translation initiation factor 3 (eIF-3) complex.

The protein localises to the cytoplasm. In terms of biological role, component of the eukaryotic translation initiation factor 3 (eIF-3) complex, which is involved in protein synthesis of a specialized repertoire of mRNAs and, together with other initiation factors, stimulates binding of mRNA and methionyl-tRNAi to the 40S ribosome. The eIF-3 complex specifically targets and initiates translation of a subset of mRNAs involved in cell proliferation. The polypeptide is Eukaryotic translation initiation factor 3 subunit J (hcr1) (Emericella nidulans (strain FGSC A4 / ATCC 38163 / CBS 112.46 / NRRL 194 / M139) (Aspergillus nidulans)).